The following is a 525-amino-acid chain: GMP synthase [glutamine-hydrolyzing] (525 aa).

Positions 9 to 207 (RILILDFGSQ…VLDICQCEKL (199 aa)) constitute a Glutamine amidotransferase type-1 domain. Cysteine 86 functions as the Nucleophile in the catalytic mechanism. Active-site residues include histidine 181 and glutamate 183. Positions 208–400 (WTPDAIIEDA…LGLPYDMLYR (193 aa)) constitute a GMPS ATP-PPase domain. Position 235 to 241 (235 to 241 (SGGVDSS)) interacts with ATP.

In terms of assembly, homodimer.

It carries out the reaction XMP + L-glutamine + ATP + H2O = GMP + L-glutamate + AMP + diphosphate + 2 H(+). Its pathway is purine metabolism; GMP biosynthesis; GMP from XMP (L-Gln route): step 1/1. Catalyzes the synthesis of GMP from XMP. This chain is GMP synthase [glutamine-hydrolyzing], found in Pseudoalteromonas atlantica (strain T6c / ATCC BAA-1087).